The primary structure comprises 244 residues: Phosphoadenosine 5'-phosphosulfate reductase (244 aa).

Residue Cys239 is the Nucleophile; cysteine thiosulfonate intermediate of the active site.

The protein belongs to the PAPS reductase family. CysH subfamily.

It is found in the cytoplasm. It carries out the reaction [thioredoxin]-disulfide + sulfite + adenosine 3',5'-bisphosphate + 2 H(+) = [thioredoxin]-dithiol + 3'-phosphoadenylyl sulfate. The protein operates within sulfur metabolism; hydrogen sulfide biosynthesis; sulfite from sulfate: step 3/3. In terms of biological role, catalyzes the formation of sulfite from phosphoadenosine 5'-phosphosulfate (PAPS) using thioredoxin as an electron donor. This Shigella flexneri protein is Phosphoadenosine 5'-phosphosulfate reductase.